Consider the following 218-residue polypeptide: Small ribosomal subunit protein uS3c (218 aa).

In terms of domain architecture, KH type-2 spans valine 47–serine 118.

It belongs to the universal ribosomal protein uS3 family. Part of the 30S ribosomal subunit.

The protein resides in the plastid. It is found in the chloroplast. This Barbarea verna (Land cress) protein is Small ribosomal subunit protein uS3c (rps3).